The sequence spans 229 residues: Enolase-phosphatase E1 (229 aa).

Belongs to the HAD-like hydrolase superfamily. MasA/MtnC family. Monomer. The cofactor is Mg(2+).

The catalysed reaction is 5-methylsulfanyl-2,3-dioxopentyl phosphate + H2O = 1,2-dihydroxy-5-(methylsulfanyl)pent-1-en-3-one + phosphate. It participates in amino-acid biosynthesis; L-methionine biosynthesis via salvage pathway; L-methionine from S-methyl-5-thio-alpha-D-ribose 1-phosphate: step 3/6. The protein operates within amino-acid biosynthesis; L-methionine biosynthesis via salvage pathway; L-methionine from S-methyl-5-thio-alpha-D-ribose 1-phosphate: step 4/6. Its function is as follows. Bifunctional enzyme that catalyzes the enolization of 2,3-diketo-5-methylthiopentyl-1-phosphate (DK-MTP-1-P) into the intermediate 2-hydroxy-3-keto-5-methylthiopentenyl-1-phosphate (HK-MTPenyl-1-P), which is then dephosphorylated to form the acireductone 1,2-dihydroxy-3-keto-5-methylthiopentene (DHK-MTPene). This chain is Enolase-phosphatase E1, found in Serratia proteamaculans (strain 568).